A 338-amino-acid chain; its full sequence is MAGSHPYFNLPDSTHPSPPSAPPSLRWHQRCQPSGATNGLLVALLGGGLPAGFVGPLSRMAYQGSNLPSLELLICRCLFHLPIALLLKLRGDPLLGPPDIRGWACFCALLNVLSIGCAYSAVQVVPAGNAATVRKGSSTVCSAVLTLCLESQGLGGYEWCGLLGSILGLIIILGPGLWTLQEGTTGVYTTLGYVQAFLGGLALSLGLLVYRSLHFPSCLPTVAFLSGLVGLLGCVPGLFVLQTPVLPSDLLSWSCVGAEGILALVSFTCVGYAVTKAHPALVCAVLHSEVVVALILQYYMLHETVALSDIMGAGVVLGSIAIITARNLSCERTGKVEE.

Residues 1–27 (MAGSHPYFNLPDSTHPSPPSAPPSLRW) are disordered. 9 helical membrane passes run 37 to 57 (TNGLLVALLGGGLPAGFVGPL), 67 to 87 (LPSLELLICRCLFHLPIALLL), 102 to 122 (GWACFCALLNVLSIGCAYSAV), 160 to 180 (CGLLGSILGLIIILGPGLWTL), 190 to 210 (TLGYVQAFLGGLALSLGLLVY), 221 to 241 (TVAFLSGLVGLLGCVPGLFVL), 250 to 270 (LLSWSCVGAEGILALVSFTCV), 281 to 301 (LVCAVLHSEVVVALILQYYML), and 305 to 325 (VALSDIMGAGVVLGSIAIITA). Residues 49-174 (LPAGFVGPLS…SILGLIIILG (126 aa)) enclose the EamA 1 domain. The 54-residue stretch at 272–325 (YAVTKAHPALVCAVLHSEVVVALILQYYMLHETVALSDIMGAGVVLGSIAIITA) folds into the EamA 2 domain.

Belongs to the SLC35G solute transporter family. As to expression, expressed in placenta and testis.

It is found in the membrane. This chain is Solute carrier family 35 member G5 (SLC35G5), found in Homo sapiens (Human).